Consider the following 372-residue polypeptide: Protein-glutamate methylesterase/protein-glutamine glutaminase (372 aa).

Residues 5–123 (RVLIVDDSAL…SANLTTVSET (119 aa)) enclose the Response regulatory domain. 4-aspartylphosphate is present on Asp56. The segment covering 140-151 (GTRSTDTTNSFS) has biased composition (polar residues). The segment at 140–177 (GTRSTDTTNSFSEPFKSTIPKPMTAAEPQKEEKPTPQR) is disordered. A compositionally biased stretch (basic and acidic residues) spans 167 to 177 (PQKEEKPTPQR). In terms of domain architecture, CheB-type methylesterase spans 178-364 (EHGNIQIIAI…VSLDNMAAAI (187 aa)). Residues Ser190, His217, and Asp313 contribute to the active site.

It belongs to the CheB family. Phosphorylated by CheA. Phosphorylation of the N-terminal regulatory domain activates the methylesterase activity.

The protein localises to the cytoplasm. The enzyme catalyses [protein]-L-glutamate 5-O-methyl ester + H2O = L-glutamyl-[protein] + methanol + H(+). It catalyses the reaction L-glutaminyl-[protein] + H2O = L-glutamyl-[protein] + NH4(+). In terms of biological role, involved in chemotaxis. Part of a chemotaxis signal transduction system that modulates chemotaxis in response to various stimuli. Catalyzes the demethylation of specific methylglutamate residues introduced into the chemoreceptors (methyl-accepting chemotaxis proteins or MCP) by CheR. Also mediates the irreversible deamidation of specific glutamine residues to glutamic acid. The polypeptide is Protein-glutamate methylesterase/protein-glutamine glutaminase (Treponema denticola (strain ATCC 35405 / DSM 14222 / CIP 103919 / JCM 8153 / KCTC 15104)).